The following is a 169-amino-acid chain: Hydroperoxy fatty acid reductase gpx1 (169 aa).

Residue C41 is part of the active site.

It belongs to the glutathione peroxidase family. As to quaternary structure, monomer.

The catalysed reaction is a hydroperoxy polyunsaturated fatty acid + NADPH + H(+) = a hydroxy polyunsaturated fatty acid + NADP(+) + H2O. With respect to regulation, mercaptosuccinate, pCMB, and nethylmaleimide act as inhibitors of the catalytic activity. Hydroperoxy fatty acid reductase essential for the removal of lipid hydroperoxides under normal and stress conditions, leading to the protection of membrane integrity. The chain is Hydroperoxy fatty acid reductase gpx1 (gpx1) from Synechocystis sp. (strain ATCC 27184 / PCC 6803 / Kazusa).